The primary structure comprises 122 residues: Alkene monooxygenase system, ferredoxin component (122 aa).

The Rieske domain occupies 16–111 (VDVCAVDDLW…LKVEGGRVLI (96 aa)). Residues Cys-55, His-57, Cys-75, and His-78 each coordinate [2Fe-2S] cluster.

This sequence belongs to the bacterial ring-hydroxylating dioxygenase ferredoxin component family. Homodimer. The alkene monooxygenase multicomponent enzyme system is composed of an electron transfer component and a monooxygenase component interacting with the effector protein XamoD. The electron transfer component is composed of a ferredoxin reductase (XamoF) and a ferredoxin (XamoC), and the monooxygenase component is formed by a heterohexamer (dimer of heterotrimers) of two alpha subunits (XamoA), two beta subunits (XamoE) and two gamma subunits (XamoB). [2Fe-2S] cluster is required as a cofactor.

The protein resides in the cytoplasm. Ferredoxin component of the alkene monooxygenase multicomponent enzyme system which catalyzes the O2- and NADH-dependent epoxidation of short chain (C2 to C6) alkenes to their corresponding epoxides. Functions as an intermediate electron transfer protein. The sequence is that of Alkene monooxygenase system, ferredoxin component from Xanthobacter autotrophicus (strain ATCC BAA-1158 / Py2).